The following is a 171-amino-acid chain: MAVKIKLTRLGKIRNPQYRIAVADARTRRDGRSIEIIGRYHPKEDPSLIEINSERAQYWLSVGAQPTEPVLKLLKITGDWQKFKGLPGAEGRLKVAPPKPSKLELFNAALAEAEGGPTTEAAKPKKKAATSGAKKAAKAAEPEAAASEAAEPEAAAAPAEGGEQAESSAES.

The interval 114–171 (EGGPTTEAAKPKKKAATSGAKKAAKAAEPEAAASEAAEPEAAAAPAEGGEQAESSAES) is disordered. The segment covering 142–171 (PEAAASEAAEPEAAAAPAEGGEQAESSAES) has biased composition (low complexity).

The protein belongs to the bacterial ribosomal protein bS16 family.

The protein is Small ribosomal subunit protein bS16 of Mycolicibacterium paratuberculosis (strain ATCC BAA-968 / K-10) (Mycobacterium paratuberculosis).